The primary structure comprises 72 residues: Translation initiation factor IF-1 (72 aa).

The 72-residue stretch at 1–72 folds into the S1-like domain; sequence MSKQDVIELE…SRGRITWRKK (72 aa).

This sequence belongs to the IF-1 family. As to quaternary structure, component of the 30S ribosomal translation pre-initiation complex which assembles on the 30S ribosome in the order IF-2 and IF-3, IF-1 and N-formylmethionyl-tRNA(fMet); mRNA recruitment can occur at any time during PIC assembly.

The protein localises to the cytoplasm. In terms of biological role, one of the essential components for the initiation of protein synthesis. Stabilizes the binding of IF-2 and IF-3 on the 30S subunit to which N-formylmethionyl-tRNA(fMet) subsequently binds. Helps modulate mRNA selection, yielding the 30S pre-initiation complex (PIC). Upon addition of the 50S ribosomal subunit IF-1, IF-2 and IF-3 are released leaving the mature 70S translation initiation complex. The chain is Translation initiation factor IF-1 from Alkaliphilus oremlandii (strain OhILAs) (Clostridium oremlandii (strain OhILAs)).